The sequence spans 105 residues: Prokineticin-1 (105 aa).

A signal peptide spans 1–19 (MRGAVQVFIMLLLATVSDC). Cystine bridges form between C26–C38, C32–C50, C37–C78, C60–C86, and C80–C96.

The protein belongs to the AVIT (prokineticin) family.

It is found in the secreted. Potently contracts gastrointestinal (GI) smooth muscle. Induces proliferation, migration and fenestration (the formation of membrane discontinuities) in capillary endothelial cells derived from endocrine glands. Has little or no effect on a variety of other endothelial and non-endothelial cell types. Induces proliferation and differentiation, but not migration, of enteric neural crest cells. Directly influences neuroblastoma progression by promoting the proliferation and migration of neuroblastoma cells. Positively regulates PTGS2 expression and prostaglandin synthesis. May play a role in placentation. May play a role in normal and pathological testis angiogenesis. The protein is Prokineticin-1 (Prok1) of Rattus norvegicus (Rat).